A 339-amino-acid chain; its full sequence is UDP-N-acetylglucosamine--N-acetylmuramyl-(pentapeptide) pyrophosphoryl-undecaprenol N-acetylglucosamine transferase (339 aa).

UDP-N-acetyl-alpha-D-glucosamine contacts are provided by residues 11–13 (TGG), Asn127, Arg170, Ser188, Ile235, and Gln280.

This sequence belongs to the glycosyltransferase 28 family. MurG subfamily.

It localises to the cell inner membrane. The enzyme catalyses di-trans,octa-cis-undecaprenyl diphospho-N-acetyl-alpha-D-muramoyl-L-alanyl-D-glutamyl-meso-2,6-diaminopimeloyl-D-alanyl-D-alanine + UDP-N-acetyl-alpha-D-glucosamine = di-trans,octa-cis-undecaprenyl diphospho-[N-acetyl-alpha-D-glucosaminyl-(1-&gt;4)]-N-acetyl-alpha-D-muramoyl-L-alanyl-D-glutamyl-meso-2,6-diaminopimeloyl-D-alanyl-D-alanine + UDP + H(+). Its pathway is cell wall biogenesis; peptidoglycan biosynthesis. Its function is as follows. Cell wall formation. Catalyzes the transfer of a GlcNAc subunit on undecaprenyl-pyrophosphoryl-MurNAc-pentapeptide (lipid intermediate I) to form undecaprenyl-pyrophosphoryl-MurNAc-(pentapeptide)GlcNAc (lipid intermediate II). The chain is UDP-N-acetylglucosamine--N-acetylmuramyl-(pentapeptide) pyrophosphoryl-undecaprenol N-acetylglucosamine transferase from Thermotoga petrophila (strain ATCC BAA-488 / DSM 13995 / JCM 10881 / RKU-1).